The chain runs to 129 residues: DNA-directed RNA polymerase II subunit RPB9 (129 aa).

Zn(2+) contacts are provided by Cys-21, Cys-24, Cys-43, Cys-46, Cys-90, Cys-93, Cys-118, and Cys-123. The C4-type zinc finger occupies 21–46 (CQECNNMLYPKEDKENKILLYACRNC). The TFIIS-type zinc-finger motif lies at 86 to 128 (EDHACPKCSHREAVFFQAQTRRAEEEMRLYYVCTNQNCTHRWT).

It belongs to the archaeal RpoM/eukaryotic RPA12/RPB9/RPC11 RNA polymerase family. In terms of assembly, component of the RNA polymerase II (Pol II) complex consisting of 12 subunits.

It localises to the nucleus. The protein localises to the nucleolus. Its function is as follows. DNA-dependent RNA polymerase catalyzes the transcription of DNA into RNA using the four ribonucleoside triphosphates as substrates. Component of RNA polymerase II which synthesizes mRNA precursors and many functional non-coding RNAs. Pol II is the central component of the basal RNA polymerase II transcription machinery. It is composed of mobile elements that move relative to each other. RPB9 is part of the upper jaw surrounding the central large cleft and thought to grab the incoming DNA template. The chain is DNA-directed RNA polymerase II subunit RPB9 from Drosophila melanogaster (Fruit fly).